The primary structure comprises 224 residues: Ribose-5-phosphate isomerase A (224 aa).

Substrate-binding positions include 34 to 37 (TGST), 87 to 90 (DGAD), and 100 to 103 (KGGG). Residue Glu-109 is the Proton acceptor of the active site. Residue Lys-127 participates in substrate binding.

Belongs to the ribose 5-phosphate isomerase family. As to quaternary structure, homodimer.

The enzyme catalyses aldehydo-D-ribose 5-phosphate = D-ribulose 5-phosphate. It functions in the pathway carbohydrate degradation; pentose phosphate pathway; D-ribose 5-phosphate from D-ribulose 5-phosphate (non-oxidative stage): step 1/1. Its function is as follows. Catalyzes the reversible conversion of ribose-5-phosphate to ribulose 5-phosphate. The sequence is that of Ribose-5-phosphate isomerase A from Francisella tularensis subsp. novicida (strain U112).